The chain runs to 125 residues: Small ribosomal subunit protein uS12 (125 aa).

Positions arginine 9–proline 28 are disordered. Position 89 is a 3-methylthioaspartic acid (aspartate 89). Residues alanine 104–alanine 125 are disordered. A compositionally biased stretch (basic residues) spans glycine 113 to alanine 125.

Belongs to the universal ribosomal protein uS12 family. As to quaternary structure, part of the 30S ribosomal subunit. Contacts proteins S8 and S17. May interact with IF1 in the 30S initiation complex.

Functionally, with S4 and S5 plays an important role in translational accuracy. In terms of biological role, interacts with and stabilizes bases of the 16S rRNA that are involved in tRNA selection in the A site and with the mRNA backbone. Located at the interface of the 30S and 50S subunits, it traverses the body of the 30S subunit contacting proteins on the other side and probably holding the rRNA structure together. The combined cluster of proteins S8, S12 and S17 appears to hold together the shoulder and platform of the 30S subunit. The protein is Small ribosomal subunit protein uS12 of Rippkaea orientalis (strain PCC 8801 / RF-1) (Cyanothece sp. (strain PCC 8801)).